Consider the following 241-residue polypeptide: MDGFTDSQAPPAYEEVKWLADTLVAFMGIGWLINYGAMIRHSYQGRTYCMGIIPLCNNIGWELVYTLVHPSSNRVELAVFAAGVTLNVIIMFAATRSAKTEWQHSPLVANHTPLIFLGGTFVCFAGHVALAAEIGPALAYSWGAVICQLVLSIGGVCQLLQRNTTRGTSVTLWLSRFLGSCCTVGFAFLRWRYWPEAFAWLAGPLVLWSLATFVLADITYGVCLYLISQTETSSTKRSKLK.

5 consecutive transmembrane segments (helical) span residues 19–39 (LADT…GAMI), 48–68 (YCMG…YTLV), 75–95 (VELA…FAAT), 114–134 (LIFL…AAEI), and 137–157 (ALAY…GGVC). Asn163 carries an N-linked (GlcNAc...) asparagine glycan. The next 2 helical transmembrane spans lie at 169-189 (SVTL…FAFL) and 198-218 (FAWL…LADI).

It belongs to the paxB family.

The protein resides in the membrane. It functions in the pathway secondary metabolite biosynthesis. Functionally, terpene cyclase; part of the gene cluster that mediates the biosynthesis of terpendoles, indole-diterpene (IDT) mycotoxins including terpendole I, terpendole K, terpendole C, as well as the kinesin Eg5 inhibitor terpendole E. Terpendoles biosynthesis begins with the synthesis of geranylgeranyl diphosphate (GGPP) by a yet unidentified GGPP synthase. Condensation of indole-3-glycerol phosphate with GGPP by the prenyltransferase terC then forms 3-geranylgeranylindole (3-GGI), followed by epoxidation and cyclization of this intermediate (by the FAD-dependent monooxygeanse terM and the terpene cyclase terB) to form paspaline. The cytochrome monooxygenase terQ then hydroxylates paspalline at C-11 to yield terpendole E. The cytochrome monooxygenase terP converts terpendole E to 13-desoxyterpendole I, and terQ converts 13-desoxyterpendole I into terpendole I. TerF and terK are required for conversion of terpendole I to terpendole C which is further converted to terpendole K. The sequence is that of Terpene cyclase terB from Tolypocladium album (Soil fungus).